The chain runs to 255 residues: RNA polymerase sigma-F factor (255 aa).

The short motif at aspartate 61–valine 74 is the Polymerase core binding element. Positions glutamine 221 to lysine 240 form a DNA-binding region, H-T-H motif.

Belongs to the sigma-70 factor family. As to quaternary structure, interacts transiently with the RNAP core.

With respect to regulation, interaction with SpoIIAB inhibits sigma-F activity throughout the cell before the formation of the asymmetric septum; after septation the interaction is confined to the mother cell, and sigma-F activity is released in the prespore. Fin, a second, forespore-specific anti-sigma factor is induced in 2 successive waves by sigma-F and sigma-G, by antagonizing sigma-F it allows the switch to sigma-G factor and progression to the late sporulation development stages. Sigma factors are initiation factors that promote the attachment of RNA polymerase to specific initiation sites and are then released. This sigma factor is responsible for the expression of sporulation specific genes. Interaction with SpoIIAB inhibits sigma-F activity throughout the cell before the formation of the asymmetric septum; after septation the interaction is confined to the mother cell, and sigma F activity is released in the prespore. Responsible for expression of csfB (the anti-sigma-G factor Gin). Associates with the RNAP core only in stationary phase cells. This Bacillus subtilis (strain 168) protein is RNA polymerase sigma-F factor (sigF).